A 104-amino-acid chain; its full sequence is UPF0213 protein VIBHAR_05350 (104 aa).

One can recognise a GIY-YIG domain in the interval 7 to 82 (QRWSVYLIRN…KQLTKTKKEL (76 aa)).

Belongs to the UPF0213 family.

The protein is UPF0213 protein VIBHAR_05350 of Vibrio campbellii (strain ATCC BAA-1116).